The chain runs to 354 residues: Glycerol-1-phosphate dehydrogenase [NAD(P)+] (354 aa).

Residues 102 to 106 (GRSID) and 124 to 127 (TAAS) contribute to the NAD(+) site. Residue Asp-129 participates in substrate binding. Ser-133 is an NAD(+) binding site. Asp-176 is a substrate binding site. 2 residues coordinate Zn(2+): Asp-176 and His-256. His-260 contributes to the substrate binding site. His-272 contributes to the Zn(2+) binding site.

It belongs to the glycerol-1-phosphate dehydrogenase family. It depends on Zn(2+) as a cofactor.

It is found in the cytoplasm. The enzyme catalyses sn-glycerol 1-phosphate + NAD(+) = dihydroxyacetone phosphate + NADH + H(+). It carries out the reaction sn-glycerol 1-phosphate + NADP(+) = dihydroxyacetone phosphate + NADPH + H(+). It participates in membrane lipid metabolism; glycerophospholipid metabolism. Catalyzes the NAD(P)H-dependent reduction of dihydroxyacetonephosphate (DHAP or glycerone phosphate) to glycerol 1-phosphate (G1P). The G1P thus generated is used as the glycerophosphate backbone of phospholipids in the cellular membranes of Archaea. In Methanothrix thermoacetophila (strain DSM 6194 / JCM 14653 / NBRC 101360 / PT) (Methanosaeta thermophila), this protein is Glycerol-1-phosphate dehydrogenase [NAD(P)+].